A 150-amino-acid chain; its full sequence is Putative esterase VC_A0580 (150 aa).

This sequence belongs to the thioesterase PaaI family.

This chain is Putative esterase VC_A0580, found in Vibrio cholerae serotype O1 (strain ATCC 39315 / El Tor Inaba N16961).